We begin with the raw amino-acid sequence, 279 residues long: Movement protein (279 aa).

Belongs to the cucumovirus movement protein family.

The protein localises to the host cell junction. It localises to the host plasmodesma. Transports viral genome to neighboring plant cells directly through plasmosdesmata, without any budding. The movement protein allows efficient cell to cell propagation, by bypassing the host cell wall barrier. Acts by forming a tubular structure at the host plasmodesmata, enlarging it enough to allow free passage of virion capsids. In Cucumber mosaic virus (strain M) (CMV), this protein is Movement protein.